A 240-amino-acid chain; its full sequence is uncharacterized protein (240 aa).

An N-terminal signal peptide occupies residues 1–30 (MNKSGMSLIITMLLLIGTAIVIGAAYYAWS).

This is an uncharacterized protein from Methanocaldococcus jannaschii (strain ATCC 43067 / DSM 2661 / JAL-1 / JCM 10045 / NBRC 100440) (Methanococcus jannaschii).